The chain runs to 198 residues: Glycerol-3-phosphate acyltransferase (198 aa).

Helical transmembrane passes span 10–30, 57–77, 86–106, 118–138, and 160–180; these read LIPI…WILV, GISF…ILIL, IMYL…WFLF, VVLS…AVVF, and AVTE…IVLI.

Belongs to the PlsY family. In terms of assembly, probably interacts with PlsX.

The protein localises to the cell inner membrane. The enzyme catalyses an acyl phosphate + sn-glycerol 3-phosphate = a 1-acyl-sn-glycero-3-phosphate + phosphate. It participates in lipid metabolism; phospholipid metabolism. In terms of biological role, catalyzes the transfer of an acyl group from acyl-phosphate (acyl-PO(4)) to glycerol-3-phosphate (G3P) to form lysophosphatidic acid (LPA). This enzyme utilizes acyl-phosphate as fatty acyl donor, but not acyl-CoA or acyl-ACP. This chain is Glycerol-3-phosphate acyltransferase, found in Anaplasma marginale (strain Florida).